The primary structure comprises 177 residues: Adenine phosphoribosyltransferase (177 aa).

The protein belongs to the purine/pyrimidine phosphoribosyltransferase family. In terms of assembly, homodimer.

The protein resides in the cytoplasm. The enzyme catalyses AMP + diphosphate = 5-phospho-alpha-D-ribose 1-diphosphate + adenine. It participates in purine metabolism; AMP biosynthesis via salvage pathway; AMP from adenine: step 1/1. Catalyzes a salvage reaction resulting in the formation of AMP, that is energically less costly than de novo synthesis. The chain is Adenine phosphoribosyltransferase from Idiomarina loihiensis (strain ATCC BAA-735 / DSM 15497 / L2-TR).